The primary structure comprises 256 residues: tRNA (guanine-N(1)-)-methyltransferase (256 aa).

Residues Gly117 and Leu137–Leu142 contribute to the S-adenosyl-L-methionine site.

This sequence belongs to the RNA methyltransferase TrmD family. Homodimer.

It is found in the cytoplasm. It catalyses the reaction guanosine(37) in tRNA + S-adenosyl-L-methionine = N(1)-methylguanosine(37) in tRNA + S-adenosyl-L-homocysteine + H(+). Specifically methylates guanosine-37 in various tRNAs. In Methylibium petroleiphilum (strain ATCC BAA-1232 / LMG 22953 / PM1), this protein is tRNA (guanine-N(1)-)-methyltransferase.